A 190-amino-acid polypeptide reads, in one-letter code: Nucleoside triphosphate pyrophosphatase (190 aa).

The Proton acceptor role is filled by Asp-69.

The protein belongs to the Maf family. It depends on a divalent metal cation as a cofactor.

Its subcellular location is the cytoplasm. It catalyses the reaction a ribonucleoside 5'-triphosphate + H2O = a ribonucleoside 5'-phosphate + diphosphate + H(+). The enzyme catalyses a 2'-deoxyribonucleoside 5'-triphosphate + H2O = a 2'-deoxyribonucleoside 5'-phosphate + diphosphate + H(+). Functionally, nucleoside triphosphate pyrophosphatase. May have a dual role in cell division arrest and in preventing the incorporation of modified nucleotides into cellular nucleic acids. The polypeptide is Nucleoside triphosphate pyrophosphatase (Helicobacter pylori (strain ATCC 700392 / 26695) (Campylobacter pylori)).